The primary structure comprises 35 residues: Photosystem II reaction center protein M (35 aa).

Residues 5 to 25 (ILGLIATALFILIPTSFLIIL) form a helical membrane-spanning segment.

It belongs to the PsbM family. PSII is composed of 1 copy each of membrane proteins PsbA, PsbB, PsbC, PsbD, PsbE, PsbF, PsbH, PsbI, PsbJ, PsbK, PsbL, PsbM, PsbT, PsbX, PsbY, PsbZ, Psb30/Ycf12, at least 3 peripheral proteins of the oxygen-evolving complex and a large number of cofactors. It forms dimeric complexes.

It is found in the plastid. The protein localises to the chloroplast thylakoid membrane. Functionally, one of the components of the core complex of photosystem II (PSII). PSII is a light-driven water:plastoquinone oxidoreductase that uses light energy to abstract electrons from H(2)O, generating O(2) and a proton gradient subsequently used for ATP formation. It consists of a core antenna complex that captures photons, and an electron transfer chain that converts photonic excitation into a charge separation. This subunit is found at the monomer-monomer interface. The polypeptide is Photosystem II reaction center protein M (Oltmannsiellopsis viridis (Marine flagellate)).